Here is a 130-residue protein sequence, read N- to C-terminus: Small ribosomal subunit protein uS8 (130 aa).

This sequence belongs to the universal ribosomal protein uS8 family. In terms of assembly, part of the 30S ribosomal subunit. Contacts proteins S5 and S12.

Its function is as follows. One of the primary rRNA binding proteins, it binds directly to 16S rRNA central domain where it helps coordinate assembly of the platform of the 30S subunit. This is Small ribosomal subunit protein uS8 from Cytophaga hutchinsonii (strain ATCC 33406 / DSM 1761 / CIP 103989 / NBRC 15051 / NCIMB 9469 / D465).